The chain runs to 287 residues: Toxin zeta (287 aa).

40 to 47 (GQPGSGKT) provides a ligand contact to ATP. The tract at residues 250–287 (MVQNQHQETPEFKAIQQKMESLQPPTPPIPKTPKLPGI) is disordered. The span at 273-287 (PPTPPIPKTPKLPGI) shows a compositional bias: pro residues.

This sequence belongs to the zeta toxin family. In the presence of the epsilon antitoxin, forms an inactive PezA(2)PezT(2) heterotetramer.

It catalyses the reaction UDP-N-acetyl-alpha-D-glucosamine + ATP = UDP-N-acetyl-alpha-D-glucosamine 3'-phosphate + ADP + H(+). Toxic component of a type II toxin-antitoxin (TA) system. Phosphorylates UDP-N-acetyl-D-glucosamine (UNAG) on the 3'-hydroxyl group of the N-acetyl-D-glucosamine moiety, yielding UNAG-3P. UNAG-3P inhibits MurA, the first committed step in cell wall synthesis, which is then blocked. Phosphorylation is inhibited by cognate epsilon antitoxin. Part of a postsegregational killing (PSK) system involved in the killing of plasmid-free cells. The zeta toxin induces programmed cell death. The sequence is that of Toxin zeta from Streptococcus agalactiae.